We begin with the raw amino-acid sequence, 1254 residues long: Vitamin B12-dependent ribonucleotide reductase (1254 aa).

Substrate is bound by residues serine 153, 198–199, glycine 230, 474–478, and 675–679; these read AC, NPCSE, and PTGTI. Cysteine 199 and cysteine 487 are disulfide-bonded. The active-site Proton acceptor is asparagine 474. Cysteine 476 functions as the Cysteine radical intermediate in the catalytic mechanism. The active-site Proton acceptor is glutamate 478.

The protein belongs to the ribonucleoside diphosphate reductase class-2 family. The cofactor is adenosylcob(III)alamin.

The catalysed reaction is a 2'-deoxyribonucleoside 5'-diphosphate + [thioredoxin]-disulfide + H2O = a ribonucleoside 5'-diphosphate + [thioredoxin]-dithiol. Its function is as follows. Catalyzes the reduction of ribonucleotides to deoxyribonucleotides. May function to provide a pool of deoxyribonucleotide precursors for DNA repair during oxygen limitation and/or for immediate growth after restoration of oxygen. This is Vitamin B12-dependent ribonucleotide reductase (nrdJ) from Bradyrhizobium diazoefficiens (strain JCM 10833 / BCRC 13528 / IAM 13628 / NBRC 14792 / USDA 110).